A 130-amino-acid chain; its full sequence is MMQDPISDMLTRIRNAQAVRKKEVVMPRSKLKMSIANVLKEEGYIVDYREEGDSTKPQLVITLKYHEGESVISEIRRVSSPALQVYKSKDELPKVKNGLGIAIISTSKGVMSDRQARRLGEGGEVLCYVS.

It belongs to the universal ribosomal protein uS8 family. As to quaternary structure, part of the 30S ribosomal subunit. Contacts proteins S5 and S12.

Functionally, one of the primary rRNA binding proteins, it binds directly to 16S rRNA central domain where it helps coordinate assembly of the platform of the 30S subunit. The sequence is that of Small ribosomal subunit protein uS8 from Coxiella burnetii (strain Dugway 5J108-111).